The primary structure comprises 294 residues: Shikimate dehydrogenase (NADP(+)) (294 aa).

Shikimate contacts are provided by residues 22-24 and serine 69; that span reads SLS. Lysine 73 (proton acceptor) is an active-site residue. Asparagine 94 and aspartate 111 together coordinate shikimate. NADP(+)-binding positions include 135-139 and leucine 236; that span reads GAGGA. Tyrosine 238 provides a ligand contact to shikimate. Residue glycine 260 participates in NADP(+) binding.

This sequence belongs to the shikimate dehydrogenase family. As to quaternary structure, homodimer.

The enzyme catalyses shikimate + NADP(+) = 3-dehydroshikimate + NADPH + H(+). The protein operates within metabolic intermediate biosynthesis; chorismate biosynthesis; chorismate from D-erythrose 4-phosphate and phosphoenolpyruvate: step 4/7. In terms of biological role, involved in the biosynthesis of the chorismate, which leads to the biosynthesis of aromatic amino acids. Catalyzes the reversible NADPH linked reduction of 3-dehydroshikimate (DHSA) to yield shikimate (SA). This is Shikimate dehydrogenase (NADP(+)) from Streptococcus equi subsp. zooepidemicus (strain H70).